The primary structure comprises 228 residues: Cytidylate kinase (228 aa).

12–20 (GPSGSGKGT) lines the ATP pocket.

Belongs to the cytidylate kinase family. Type 1 subfamily.

It is found in the cytoplasm. The catalysed reaction is CMP + ATP = CDP + ADP. It carries out the reaction dCMP + ATP = dCDP + ADP. This is Cytidylate kinase from Pseudomonas putida (strain W619).